Reading from the N-terminus, the 32-residue chain is Ribulose bisphosphate carboxylase/oxygenase activase, chloroplastic (32 aa).

The tract at residues 13–32 (FGALREGPPTFEQPAMTIEK) is disordered.

The protein belongs to the RuBisCO activase family.

It localises to the plastid. The protein resides in the chloroplast stroma. Activation of RuBisCO (ribulose-1,5-bisphosphate carboxylase/oxygenase; EC 4.1.1.39) involves the ATP-dependent carboxylation of the epsilon-amino group of lysine leading to a carbamate structure. This is Ribulose bisphosphate carboxylase/oxygenase activase, chloroplastic from Populus euphratica (Euphrates poplar).